Reading from the N-terminus, the 117-residue chain is NADH-ubiquinone oxidoreductase chain 3 (117 aa).

The next 3 membrane-spanning stretches (helical) occupy residues 3–23 (LLLT…IVSF), 56–76 (FFLV…LLPL), and 85–105 (PMFT…GLIY).

Belongs to the complex I subunit 3 family.

It is found in the mitochondrion membrane. It catalyses the reaction a ubiquinone + NADH + 5 H(+)(in) = a ubiquinol + NAD(+) + 4 H(+)(out). Its function is as follows. Core subunit of the mitochondrial membrane respiratory chain NADH dehydrogenase (Complex I) that is believed to belong to the minimal assembly required for catalysis. Complex I functions in the transfer of electrons from NADH to the respiratory chain. The immediate electron acceptor for the enzyme is believed to be ubiquinone. This Tetraodon nigroviridis (Spotted green pufferfish) protein is NADH-ubiquinone oxidoreductase chain 3 (MT-ND3).